The sequence spans 203 residues: Ribonuclease HII (203 aa).

An RNase H type-2 domain is found at 15-201; the sequence is LLVAGLDEAG…VAQAPLRFPE (187 aa). A divalent metal cation is bound by residues Asp21, Glu22, and Asp111.

The protein belongs to the RNase HII family. The cofactor is Mn(2+). It depends on Mg(2+) as a cofactor.

Its subcellular location is the cytoplasm. The enzyme catalyses Endonucleolytic cleavage to 5'-phosphomonoester.. In terms of biological role, endonuclease that specifically degrades the RNA of RNA-DNA hybrids. In Thermus thermophilus (strain ATCC BAA-163 / DSM 7039 / HB27), this protein is Ribonuclease HII.